Reading from the N-terminus, the 104-residue chain is Gastrin (104 aa).

Residues 1–21 form the signal peptide; the sequence is MQRLCVCVLILALALTAFSEA. The tract at residues 22 to 49 is disordered; that stretch reads SWKPRSQLQDAPSGPGANGGLEPHWLNR. Positions 22–58 are excised as a propeptide; the sequence is SWKPRSQLQDAPSGPGANGGLEPHWLNRLGPASHHRW. Residues Gln-59 and Gln-76 each carry the pyrrolidone carboxylic acid modification. Tyr-87 carries the post-translational modification Sulfotyrosine. Position 92 is a phenylalanine amide (Phe-92). Ser-96 carries the post-translational modification Phosphoserine. Residues 96 to 104 constitute a propeptide that is removed on maturation; it reads SAEDGDQHP.

Belongs to the gastrin/cholecystokinin family.

It localises to the secreted. Gastrin stimulates the stomach mucosa to produce and secrete hydrochloric acid and the pancreas to secrete its digestive enzymes. It also stimulates smooth muscle contraction and increases blood circulation and water secretion in the stomach and intestine. This Felis catus (Cat) protein is Gastrin (GAST).